The sequence spans 205 residues: Recombination protein RecR (205 aa).

A C4-type zinc finger spans residues C58–C73. Residues R81–P177 form the Toprim domain.

It belongs to the RecR family.

Functionally, may play a role in DNA repair. It seems to be involved in an RecBC-independent recombinational process of DNA repair. It may act with RecF and RecO. In Cytophaga hutchinsonii (strain ATCC 33406 / DSM 1761 / CIP 103989 / NBRC 15051 / NCIMB 9469 / D465), this protein is Recombination protein RecR.